The chain runs to 1379 residues: DNA-directed RNA polymerase subunit beta (1379 aa).

The protein belongs to the RNA polymerase beta chain family. The RNAP catalytic core consists of 2 alpha, 1 beta, 1 beta' and 1 omega subunit. When a sigma factor is associated with the core the holoenzyme is formed, which can initiate transcription.

It carries out the reaction RNA(n) + a ribonucleoside 5'-triphosphate = RNA(n+1) + diphosphate. Functionally, DNA-dependent RNA polymerase catalyzes the transcription of DNA into RNA using the four ribonucleoside triphosphates as substrates. The protein is DNA-directed RNA polymerase subunit beta of Rhizobium etli (strain ATCC 51251 / DSM 11541 / JCM 21823 / NBRC 15573 / CFN 42).